We begin with the raw amino-acid sequence, 154 residues long: Endoribonuclease YbeY (154 aa).

Zn(2+) is bound by residues His-120, His-124, and His-130.

This sequence belongs to the endoribonuclease YbeY family. Zn(2+) is required as a cofactor.

The protein localises to the cytoplasm. Single strand-specific metallo-endoribonuclease involved in late-stage 70S ribosome quality control and in maturation of the 3' terminus of the 16S rRNA. The polypeptide is Endoribonuclease YbeY (Oceanobacillus iheyensis (strain DSM 14371 / CIP 107618 / JCM 11309 / KCTC 3954 / HTE831)).